We begin with the raw amino-acid sequence, 139 residues long: Large-conductance mechanosensitive channel (139 aa).

3 helical membrane-spanning segments follow: residues 19 to 39 (VGVI…ADII), 40 to 60 (MPIV…LPLS), and 81 to 101 (GNFL…FMVI).

Belongs to the MscL family. In terms of assembly, homopentamer.

It localises to the cell inner membrane. Channel that opens in response to stretch forces in the membrane lipid bilayer. May participate in the regulation of osmotic pressure changes within the cell. This chain is Large-conductance mechanosensitive channel, found in Nitrobacter winogradskyi (strain ATCC 25391 / DSM 10237 / CIP 104748 / NCIMB 11846 / Nb-255).